We begin with the raw amino-acid sequence, 103 residues long: Large ribosomal subunit protein uL23 (103 aa).

Belongs to the universal ribosomal protein uL23 family. In terms of assembly, part of the 50S ribosomal subunit. Contacts protein L29, and trigger factor when it is bound to the ribosome.

Functionally, one of the early assembly proteins it binds 23S rRNA. One of the proteins that surrounds the polypeptide exit tunnel on the outside of the ribosome. Forms the main docking site for trigger factor binding to the ribosome. The chain is Large ribosomal subunit protein uL23 from Zymomonas mobilis subsp. mobilis (strain ATCC 31821 / ZM4 / CP4).